Consider the following 251-residue polypeptide: Probable transcriptional regulatory protein Francci3_1368 (251 aa).

It belongs to the TACO1 family.

The protein resides in the cytoplasm. This chain is Probable transcriptional regulatory protein Francci3_1368, found in Frankia casuarinae (strain DSM 45818 / CECT 9043 / HFP020203 / CcI3).